A 93-amino-acid polypeptide reads, in one-letter code: Large ribosomal subunit protein uL23c (93 aa).

Belongs to the universal ribosomal protein uL23 family. In terms of assembly, part of the 50S ribosomal subunit.

Its subcellular location is the plastid. It is found in the chloroplast. Binds to 23S rRNA. This chain is Large ribosomal subunit protein uL23c (rpl23), found in Fragaria ananassa (Strawberry).